The primary structure comprises 78 residues: Small ribosomal subunit protein bS18 (78 aa).

It belongs to the bacterial ribosomal protein bS18 family. Part of the 30S ribosomal subunit. Forms a tight heterodimer with protein bS6.

In terms of biological role, binds as a heterodimer with protein bS6 to the central domain of the 16S rRNA, where it helps stabilize the platform of the 30S subunit. The sequence is that of Small ribosomal subunit protein bS18 from Kineococcus radiotolerans (strain ATCC BAA-149 / DSM 14245 / SRS30216).